A 589-amino-acid polypeptide reads, in one-letter code: MAAADGDDSLYPIAVLIDELRNEDVQLRLNSIKKLSTIALALGVERTRSELLPFLTDTIYDEDEVLLALAEQLGTFTTLVGGPEYVHCLLPPLESLATVEETVVRDKAVESLRAISHEHSPSDLEAHFVPLVKRLAGGDWFTSRTSACGLFSVCYPRVSSAVKAELRQYFRNLCSDDTPMVRRAAASKLGEFAKVLELDNVKSEIIPMFSNLASDEQDSVRLLAVEACVNIAQLLPQEDLEALVMPTLRQAAEDKSWRVRYMVADKFTELHKAVGPEITKTDLVPAFQNLMKDCEAEVRAAASHKVKEFCENLSADCRENVIMTQILPCIKELVSDANQHVKSALASVIMGLSPILGKDSTIEHLLPLFLAQLKDECPEVRLNIISNLDCVNEVIGIRQLSQSLLPAIVELAEDAKWRVRLAIIEYMPLLAGQLGVEFFDEKLNSLCMAWLVDHVYAIREAATSNLKKLVEKFGKEWAHATIIPKVLAMSGDPNYLHRMTTLFCINVLSEVCGQDITTKHMLPTVLRMAGDPVANVRFNVAKSLQKIGPILDNSTLQSEVKPVLEKLTQDQDVDVKYFAQEALTVLSLA.

At Ala-2 the chain carries N-acetylalanine. 15 HEAT repeats span residues Asp-8–Arg-46, Thr-47–Glu-84, Tyr-85–Asp-123, Leu-124–Ala-161, Val-162–Asn-200, Val-201–Asp-239, Leu-240–Ile-278, Thr-279–Val-321, Ile-322–Ser-360, Thr-361–Gln-399, Leu-400–Phe-438, Phe-439–Trp-477, Ala-478–Ile-516, Thr-517–Thr-555, and Leu-556–Ala-589. Residues Asp-8–Gln-399 form a PP2A subunit B binding region. The segment at Thr-47–Val-321 is polyoma small and medium T antigens Binding. The SV40 small T antigen binding stretch occupies residues Tyr-85–Asp-239. Lys-280 is modified (N6-acetyllysine). The tract at residues Leu-400 to Ala-589 is PP2A subunit C binding.

It belongs to the phosphatase 2A regulatory subunit A family. PP2A consists of a common heterodimeric core enzyme, composed of PPP2CA a 36 kDa catalytic subunit (subunit C) and PPP2R1A a 65 kDa constant regulatory subunit (PR65 or subunit A), that associates with a variety of regulatory subunits. Proteins that associate with the core dimer include three families of regulatory subunits B (the R2/B/PR55/B55, R3/B''/PR72/PR130/PR59 and R5/B'/B56 families), the 48 kDa variable regulatory subunit, viral proteins, and cell signaling molecules. Found in a complex with at least ARL2, PPP2CB, PPP2R1A, PPP2R2A, PPP2R5E and TBCD. Interacts with the PP2A C catalytic subunit PPP2CA. Interacts with the PP2A B subunit PPP2R2A. Interacts with the PP2A B subunit PPP2R5D. Interacts with FOXO1; the interaction dephosphorylates FOXO1 on AKT-mediated phosphorylation sites. Interacts with IPO9. Interacts with TP53 and SGO1. Interacts with PLA2G16; this interaction might decrease PP2A activity. Interacts with CTTNBP2NL. Interacts with GNA12; the interaction promotes protein phosphatase 2A activation causing dephosphorylation of MAPT. Interacts with CIP2A; this interaction stabilizes CIP2A. Interacts with PABIR1/FAM122A. Interacts with ADCY8; antagonizes interaction between ADCY8 and calmodulin. Interacts with CRTC3 (when phosphorylated at 'Ser-391'). Interacts with SPRY2. Part of the core of STRIPAK complexes composed of PP2A catalytic and scaffolding subunits, the striatins (PP2A regulatory subunits), the striatin-associated proteins MOB4, STRIP1 and STRIP2, PDCD10 and members of the STE20 kinases, such as STK24 and STK26. Component of the Integrator-PP2A (INTAC) complex, composed of the Integrator core complex and protein phosphatase 2A subunits PPP2CA and PPP2R1A.

Its subcellular location is the cytoplasm. The protein resides in the nucleus. It localises to the chromosome. It is found in the centromere. The protein localises to the lateral cell membrane. Its subcellular location is the cell projection. The protein resides in the dendrite. Its function is as follows. The PR65 subunit of protein phosphatase 2A serves as a scaffolding molecule to coordinate the assembly of the catalytic subunit and a variable regulatory B subunit. Upon interaction with GNA12 promotes dephosphorylation of microtubule associated protein TAU/MAPT. Required for proper chromosome segregation and for centromeric localization of SGO1 in mitosis. Together with RACK1 adapter, mediates dephosphorylation of AKT1 at 'Ser-473', preventing AKT1 activation and AKT-mTOR signaling pathway. Dephosphorylation of AKT1 is essential for regulatory T-cells (Treg) homeostasis and stability. Part of the striatin-interacting phosphatase and kinase (STRIPAK) complexes. STRIPAK complexes have critical roles in protein (de)phosphorylation and are regulators of multiple signaling pathways including Hippo, MAPK, nuclear receptor and cytoskeleton remodeling. Different types of STRIPAK complexes are involved in a variety of biological processes such as cell growth, differentiation, apoptosis, metabolism and immune regulation. Key mediator of a quality checkpoint during transcription elongation as part of the Integrator-PP2A (INTAC) complex. The INTAC complex drives premature transcription termination of transcripts that are unfavorably configured for transcriptional elongation: within the INTAC complex, acts as a scaffolding subunit for PPP2CA, which catalyzes dephosphorylation of the C-terminal domain (CTD) of Pol II subunit POLR2A/RPB1 and SUPT5H/SPT5, thereby preventing transcriptional elongation. Regulates the recruitment of the SKA complex to kinetochores. The chain is Serine/threonine-protein phosphatase 2A 65 kDa regulatory subunit A alpha isoform (PPP2R1A) from Bos taurus (Bovine).